The primary structure comprises 61 residues: Large ribosomal subunit protein uL30 (61 aa).

It belongs to the universal ribosomal protein uL30 family. As to quaternary structure, part of the 50S ribosomal subunit.

The chain is Large ribosomal subunit protein uL30 from Caulobacter vibrioides (strain ATCC 19089 / CIP 103742 / CB 15) (Caulobacter crescentus).